Reading from the N-terminus, the 197-residue chain is Imidazoleglycerol-phosphate dehydratase (197 aa).

This sequence belongs to the imidazoleglycerol-phosphate dehydratase family.

The protein localises to the cytoplasm. It carries out the reaction D-erythro-1-(imidazol-4-yl)glycerol 3-phosphate = 3-(imidazol-4-yl)-2-oxopropyl phosphate + H2O. It participates in amino-acid biosynthesis; L-histidine biosynthesis; L-histidine from 5-phospho-alpha-D-ribose 1-diphosphate: step 6/9. In Bradyrhizobium sp. (strain BTAi1 / ATCC BAA-1182), this protein is Imidazoleglycerol-phosphate dehydratase.